The following is a 597-amino-acid chain: DNA mismatch repair protein MutL (597 aa).

The protein belongs to the DNA mismatch repair MutL/HexB family.

Functionally, this protein is involved in the repair of mismatches in DNA. It is required for dam-dependent methyl-directed DNA mismatch repair. May act as a 'molecular matchmaker', a protein that promotes the formation of a stable complex between two or more DNA-binding proteins in an ATP-dependent manner without itself being part of a final effector complex. This Rhodopseudomonas palustris (strain BisB5) protein is DNA mismatch repair protein MutL.